Consider the following 178-residue polypeptide: Translation initiation factor IF-3 (178 aa).

It belongs to the IF-3 family. Monomer.

It localises to the cytoplasm. In terms of biological role, IF-3 binds to the 30S ribosomal subunit and shifts the equilibrium between 70S ribosomes and their 50S and 30S subunits in favor of the free subunits, thus enhancing the availability of 30S subunits on which protein synthesis initiation begins. The chain is Translation initiation factor IF-3 from Nautilia profundicola (strain ATCC BAA-1463 / DSM 18972 / AmH).